The chain runs to 181 residues: Regulator of G-protein signaling 10 (181 aa).

The tract at residues 1–35 (MFTRAVSRLSRKRPPSDIHDGDGSSSSGHQSLKST) is disordered. Phosphoserine occurs at positions 24 and 41. Residues 41–156 (SLENLLEDPE…LKSDLFLKPK (116 aa)) enclose the RGS domain. C74 carries S-palmitoyl cysteine lipidation. The segment at 155–181 (PKRTEEEEEEPPDAQTAAKRASRIYNT) is disordered. S176 carries the post-translational modification Phosphoserine.

In terms of assembly, interacts with GNAZ, GNAI1 and GNAI3. Associates specifically with the activated, GTP-bound forms of GNAZ and GNAI3.

The protein resides in the cytoplasm. Its subcellular location is the cytosol. It is found in the nucleus. Regulates G protein-coupled receptor signaling cascades, including signaling downstream of the muscarinic acetylcholine receptor CHRM2. Inhibits signal transduction by increasing the GTPase activity of G protein alpha subunits, thereby driving them into their inactive GDP-bound form. Modulates the activity of potassium channels that are activated in response to CHRM2 signaling. Activity on GNAZ is inhibited by palmitoylation of the G-protein. This chain is Regulator of G-protein signaling 10 (Rgs10), found in Mus musculus (Mouse).